The sequence spans 330 residues: Alpha/beta hydrolase domain-containing protein VTE7 (330 aa).

One can recognise an AB hydrolase-1 domain in the interval 84-315 (VVLLHCFDSS…GHLPHVENPK (232 aa)). The Nucleophile role is filled by Ser157. Residues Asp279 and His307 each act as charge relay system in the active site.

The protein belongs to the AB hydrolase superfamily.

It is found in the plastid. Its subcellular location is the chloroplast envelope. Hydrolase involved in tocopherol (vitamin E) biosynthesis. Releases prenyl alcohols from chlorophyll biosynthetic intermediates, which are then converted to the corresponding diphosphates for tocopherol biosynthesis. Provides most of the phytol from chlorophyll for tocopherol biosynthesis in seeds. The protein is Alpha/beta hydrolase domain-containing protein VTE7 of Arabidopsis thaliana (Mouse-ear cress).